Consider the following 314-residue polypeptide: Dihydroorotate dehydrogenase B (NAD(+)), catalytic subunit (314 aa).

Substrate-binding positions include Lys55, 79–83, and Asn136; that span reads NAMGL. Residue 55-56 coordinates FMN; that stretch reads KS. Asn136 lines the FMN pocket. The active-site Nucleophile is Cys139. FMN is bound by residues Lys174 and Ile200. A substrate-binding site is contributed by 201 to 202; the sequence is NT. Residues Gly226, 252 to 253, and 274 to 275 each bind FMN; these read GG and GS.

This sequence belongs to the dihydroorotate dehydrogenase family. Type 1 subfamily. Heterotetramer of 2 PyrK and 2 PyrD type B subunits. FMN serves as cofactor.

The protein resides in the cytoplasm. The enzyme catalyses (S)-dihydroorotate + NAD(+) = orotate + NADH + H(+). The protein operates within pyrimidine metabolism; UMP biosynthesis via de novo pathway; orotate from (S)-dihydroorotate (NAD(+) route): step 1/1. In terms of biological role, catalyzes the conversion of dihydroorotate to orotate with NAD(+) as electron acceptor. The sequence is that of Dihydroorotate dehydrogenase B (NAD(+)), catalytic subunit (pyrD) from Methanosarcina mazei (strain ATCC BAA-159 / DSM 3647 / Goe1 / Go1 / JCM 11833 / OCM 88) (Methanosarcina frisia).